Here is a 133-residue protein sequence, read N- to C-terminus: Transcriptional regulator MraZ (133 aa).

SpoVT-AbrB domains follow at residues 5–47 (TYEH…SKDD) and 76–119 (TVEI…SKNK).

It belongs to the MraZ family. In terms of assembly, forms oligomers.

It is found in the cytoplasm. The protein resides in the nucleoid. This Mycoplasma mycoides subsp. mycoides SC (strain CCUG 32753 / NCTC 10114 / PG1) protein is Transcriptional regulator MraZ.